The sequence spans 111 residues: Phosphoribosyl-AMP cyclohydrolase (111 aa).

Asp80 contributes to the Mg(2+) binding site. Cys81 is a binding site for Zn(2+). The Mg(2+) site is built by Asp82 and Asp84. Zn(2+) contacts are provided by Cys97 and Cys104.

It belongs to the PRA-CH family. In terms of assembly, homodimer. Mg(2+) is required as a cofactor. Zn(2+) serves as cofactor.

It is found in the cytoplasm. It catalyses the reaction 1-(5-phospho-beta-D-ribosyl)-5'-AMP + H2O = 1-(5-phospho-beta-D-ribosyl)-5-[(5-phospho-beta-D-ribosylamino)methylideneamino]imidazole-4-carboxamide. Its pathway is amino-acid biosynthesis; L-histidine biosynthesis; L-histidine from 5-phospho-alpha-D-ribose 1-diphosphate: step 3/9. In terms of biological role, catalyzes the hydrolysis of the adenine ring of phosphoribosyl-AMP. This chain is Phosphoribosyl-AMP cyclohydrolase, found in Mycobacterium marinum (strain ATCC BAA-535 / M).